We begin with the raw amino-acid sequence, 74 residues long: uncharacterized protein (74 aa).

This is an uncharacterized protein from Caenorhabditis elegans.